The chain runs to 179 residues: Large ribosomal subunit protein uL5 (179 aa).

It belongs to the universal ribosomal protein uL5 family. As to quaternary structure, part of the 50S ribosomal subunit; part of the 5S rRNA/L5/L18/L25 subcomplex. Contacts the 5S rRNA and the P site tRNA. Forms a bridge to the 30S subunit in the 70S ribosome.

In terms of biological role, this is one of the proteins that bind and probably mediate the attachment of the 5S RNA into the large ribosomal subunit, where it forms part of the central protuberance. In the 70S ribosome it contacts protein S13 of the 30S subunit (bridge B1b), connecting the 2 subunits; this bridge is implicated in subunit movement. Contacts the P site tRNA; the 5S rRNA and some of its associated proteins might help stabilize positioning of ribosome-bound tRNAs. In Listeria innocua serovar 6a (strain ATCC BAA-680 / CLIP 11262), this protein is Large ribosomal subunit protein uL5.